We begin with the raw amino-acid sequence, 316 residues long: Pantothenate kinase (316 aa).

95 to 102 (GSVAVGKS) serves as a coordination point for ATP.

It belongs to the prokaryotic pantothenate kinase family.

The protein resides in the cytoplasm. It carries out the reaction (R)-pantothenate + ATP = (R)-4'-phosphopantothenate + ADP + H(+). Its pathway is cofactor biosynthesis; coenzyme A biosynthesis; CoA from (R)-pantothenate: step 1/5. The protein is Pantothenate kinase of Yersinia pseudotuberculosis serotype O:3 (strain YPIII).